Reading from the N-terminus, the 230-residue chain is Flagellar L-ring protein (230 aa).

A signal peptide spans 1–15; that stretch reads MSRLPSLSRPCLAIA. A lipid anchor (N-palmitoyl cysteine) is attached at cysteine 16. A lipid anchor (S-diacylglycerol cysteine) is attached at cysteine 16.

This sequence belongs to the FlgH family. In terms of assembly, the basal body constitutes a major portion of the flagellar organelle and consists of four rings (L,P,S, and M) mounted on a central rod.

The protein localises to the cell outer membrane. It is found in the bacterial flagellum basal body. Assembles around the rod to form the L-ring and probably protects the motor/basal body from shearing forces during rotation. The protein is Flagellar L-ring protein of Xanthomonas axonopodis pv. citri (strain 306).